The sequence spans 520 residues: Cell adhesion molecule CEACAM2 (520 aa).

The first 34 residues, 1-34, serve as a signal peptide directing secretion; sequence MELASAHLHKGQVPWFGLLLTASLLASWSPPTTA. One can recognise an Ig-like V-type domain in the interval 35–141; it reads QVTVMAFPLH…RVLTGQFHVH (107 aa). Residues 35–422 are Extracellular-facing; that stretch reads QVTVMAFPLH…IFDSTYDISD (388 aa). N-linked (GlcNAc...) asparagine glycans are attached at residues asparagine 87, asparagine 104, asparagine 148, asparagine 152, asparagine 175, asparagine 199, asparagine 206, asparagine 210, asparagine 226, asparagine 258, asparagine 290, asparagine 294, asparagine 304, asparagine 317, asparagine 333, and asparagine 361. Ig-like C2-type domains are found at residues 145-234, 239-319, and 327-411; these read LKSN…FSLN, PDTP…KNIT, and PSLQ…IKLE. A disulfide bridge links cysteine 167 with cysteine 217. The cysteines at positions 261 and 301 are disulfide-linked. The cysteines at positions 346 and 394 are disulfide-linked. Residues 423 to 443 traverse the membrane as a helical segment; it reads VPIAVIITGAVAGVILIAGLA. Topologically, residues 444-520 are cytoplasmic; the sequence is YRLCSRKSRW…ETVYSEVKKK (77 aa). The segment at 457–520 is disordered; the sequence is QRDLTEHKPS…ETVYSEVKKK (64 aa). Polar residues predominate over residues 466 to 480; sequence SASNHNLAPSDNSPN. Position 487 is a phosphotyrosine (tyrosine 487). Positions 490–513 are enriched in polar residues; the sequence is LNFNSQQPNRPTSAPSSPRATETV. Serine 502 carries the phosphoserine modification. Tyrosine 514 bears the Phosphotyrosine mark.

It belongs to the immunoglobulin superfamily. CEA family. In terms of assembly, interacts weakly with MHV spike protein in tissue culture. As to expression, isoform 2 is detected in elongating spermatids within the seminiferous epithelium (at protein level). Expressed in kidney, colon, uterus, gut mononuclear cells, crypt epithelia of intestinal tissues, and to a lesser extent, in spleen. Expressed in brain including VMH, globus pallidus, ventral pallidum, striatum, olfactory bulb and hippocampus. Also detected in rectal carcinoma cell line CMT93. Isoform 2 and isoform 3 are expressed in testis. Isoform 2 is detected in seminiferous tubule, not detected in epididymal spermatozoa. Also not observed on spermatogonia, spermatocytes, round spermatids or somatic Sertoli cells. During stages I-VII of spermatogenesis, detected on the elongating spermatids. At spermiation (stage VIII) and subsequent stages IX-XII, levels are drastically reduced or absent in the seminiferous tubules. Sometimes weakly detected in the apical region of stage-VIII seminiferous epithelium. Isoform 2 level is very low in stomach, kidney, intestine, liver and spleen.

It is found in the cell membrane. In terms of biological role, controls energy balance and peripheral insulin action. Involved in the regulation of feeding behavior particularly in the ventromedial nucleus of hypothalamus (VMH) regulation of food intake. Has a role in the regulation of metabolic rate and insulin sensitivity or resistance via effects on brown adipogenesis, sympathetic nervous outflow to brown adipose tissue, spontaneous activity and energy expenditure in skeletal muscle. In case of murine coronavirus (MHV) infection, does probably not serve as functional receptor for the virus. Its function is as follows. Isoform 2 may be an adhesion molecule contributing to cell to cell adhesion between elongating spermatids and Sertoli cells within the seminiferous epithelium. This is Cell adhesion molecule CEACAM2 from Mus musculus (Mouse).